Consider the following 281-residue polypeptide: Clc-like protein 5 (281 aa).

Transmembrane regions (helical) follow at residues 13-33 (LATLISSVISNFLIFFATITP), 104-124 (VLILNVISMICMSLCAAAVIF), 137-157 (IMLDVFAGFASLLLCVSLIVF), and 184-204 (YYLAGLAFVISVITVLFAALV).

Belongs to the Clc family.

The protein resides in the membrane. This Caenorhabditis elegans protein is Clc-like protein 5 (clc-5).